Reading from the N-terminus, the 453-residue chain is MARKVVSRKRKAPASPGAGSDAQGPQFGWDHSLHKRKRLPPVKRSLVYYLKNREVRLQNETSYSRVLHGYAAQQLPSLLKEREFHLGTLNKVFASQWLNHRQVVCGTKCNTLFVVDVQTSQITKIPILKDREPGGVTQQGCGIHAIELNPSRTLLATGGDNPNSLAIYRLPTLDPVCVGDDGHKDWIFSIAWISDTMAVSGSRDGSMGLWEVTDDVLTKSDARHNVSRVPVYAHITHKALKDIPKEDTNPDNCKVRALAFNNKNKELGAVSLDGYFHLWKAENTLSKLLSTKLPYCRENVCLAYGSEWSVYAVGSQAHVSFLDPRQPSYNVKSVCSRERGSGIRSVSFYEHIITVGTGQGSLLFYDIRAQRFLEERLSACYGSKPRLAGENLKLTTGKGWLNHDETWRNYFSDIDFFPNAVYTHCYDSSGTKLFVAGGPLPSGLHGNYAGLWS.

Residues 1 to 12 (MARKVVSRKRKA) show a composition bias toward basic residues. The tract at residues 1–34 (MARKVVSRKRKAPASPGAGSDAQGPQFGWDHSLH) is disordered. A required for nuclear location and interaction with MOV10 region spans residues 1–38 (MARKVVSRKRKAPASPGAGSDAQGPQFGWDHSLHKRKR). S15 carries the phosphoserine modification. WD repeat units follow at residues 81 to 122 (EREF…TSQI), 123 to 175 (TKIP…TLDP), 176 to 242 (VCVG…ALKD), 243 to 286 (IPKE…NTLS), 287 to 331 (KLLS…SYNV), and 332 to 366 (KSVC…LFYD).

It belongs to the WD repeat DCAF12 family. Component of the DCX(DCAF12) E3 ubiquitin ligase complex, at least composed of CUL4 (CUL4A or CUL4B), DDB1, DCAF12 and RBX1. As to expression, highly expressed in lung cancer tissues and some cancer cell lines. Restricted expression in normal testis.

Its subcellular location is the cytoplasm. It localises to the cytoskeleton. The protein localises to the microtubule organizing center. The protein resides in the centrosome. It is found in the nucleus. Its pathway is protein modification; protein ubiquitination. In terms of biological role, substrate-recognition component of a DCX (DDB1-CUL4-X-box) E3 ubiquitin-protein ligase complex of the DesCEND (destruction via C-end degrons) pathway, which recognizes a C-degron located at the extreme C terminus of target proteins, leading to their ubiquitination and degradation. The C-degron recognized by the DesCEND pathway is usually a motif of less than ten residues and can be present in full-length proteins, truncated proteins or proteolytically cleaved forms. The DCX(DCAF12) complex specifically recognizes proteins with a diglutamate (Glu-Glu) at the C-terminus, such as MAGEA3, MAGEA6 and CCT5, leading to their ubiquitination and degradation. Ubiquitination of MAGEA3, MAGEA6 by DCX(DCAF12) complex is required for starvation-induced autophagy. Also directly recognizes the C-terminal glutamate-leucine (Glu-Leu) degron as an alternative degron in proteins such as MOV10, leading to their ubiquitination and degradation. Controls the protein level of MOV10 during spermatogenesis and in T cells, especially after their activation. This is DDB1- and CUL4-associated factor 12 from Homo sapiens (Human).